We begin with the raw amino-acid sequence, 325 residues long: MILDSTVNMLAQKILDEGPQALSFQEACSLTELPARSIPDLFLAACKIRQHYQKDDVVLCSILNAKSGACAENCAFCSQSGHHRTDVVKRPLLSAEAMIEEARRLDSAGATRFSMVTSGSRLNAAEIETVGQAASAITKSTRLTVCASLGQLTASSAERLKAGGVSVYHHNLETARSFFPQICTTHDYEEDIETLLIARKAGLRLCSGGIFGLGESWEQRVEMAFTLRELDVDSIPINFLNPLPGTRMADRSLLPPMEALQVIALYRFIHPAKPLLICGGREITLRDFQSWIFLAGASGMIVGNYLTTQGRDIGMDRDMIQSGLF.

Positions 52–281 constitute a Radical SAM core domain; the sequence is YQKDDVVLCS…AKPLLICGGR (230 aa). 3 residues coordinate [4Fe-4S] cluster: Cys-70, Cys-74, and Cys-77. Residues Ser-114, Cys-146, and Cys-206 each coordinate [2Fe-2S] cluster.

The protein belongs to the radical SAM superfamily. Biotin synthase family. As to quaternary structure, homodimer. [4Fe-4S] cluster is required as a cofactor. Requires [2Fe-2S] cluster as cofactor.

The catalysed reaction is (4R,5S)-dethiobiotin + (sulfur carrier)-SH + 2 reduced [2Fe-2S]-[ferredoxin] + 2 S-adenosyl-L-methionine = (sulfur carrier)-H + biotin + 2 5'-deoxyadenosine + 2 L-methionine + 2 oxidized [2Fe-2S]-[ferredoxin]. Its pathway is cofactor biosynthesis; biotin biosynthesis; biotin from 7,8-diaminononanoate: step 2/2. In terms of biological role, catalyzes the conversion of dethiobiotin (DTB) to biotin by the insertion of a sulfur atom into dethiobiotin via a radical-based mechanism. The polypeptide is Biotin synthase (Syntrophus aciditrophicus (strain SB)).